Reading from the N-terminus, the 461-residue chain is Cysteine--tRNA ligase (461 aa).

Cysteine 28 lines the Zn(2+) pocket. The short motif at 30–40 (ITVYDLCHIGH) is the 'HIGH' region element. The Zn(2+) site is built by cysteine 209, histidine 234, and glutamate 238. The 'KMSKS' region signature appears at 266–270 (KMSKS). ATP is bound at residue lysine 269.

It belongs to the class-I aminoacyl-tRNA synthetase family. As to quaternary structure, monomer. It depends on Zn(2+) as a cofactor.

It is found in the cytoplasm. It catalyses the reaction tRNA(Cys) + L-cysteine + ATP = L-cysteinyl-tRNA(Cys) + AMP + diphosphate. This Salmonella agona (strain SL483) protein is Cysteine--tRNA ligase.